We begin with the raw amino-acid sequence, 241 residues long: 1-(5-phosphoribosyl)-5-[(5-phosphoribosylamino)methylideneamino] imidazole-4-carboxamide isomerase (241 aa).

Asp8 serves as the catalytic Proton acceptor. Asp129 serves as the catalytic Proton donor.

The protein belongs to the HisA/HisF family.

The protein resides in the cytoplasm. The enzyme catalyses 1-(5-phospho-beta-D-ribosyl)-5-[(5-phospho-beta-D-ribosylamino)methylideneamino]imidazole-4-carboxamide = 5-[(5-phospho-1-deoxy-D-ribulos-1-ylimino)methylamino]-1-(5-phospho-beta-D-ribosyl)imidazole-4-carboxamide. Its pathway is amino-acid biosynthesis; L-histidine biosynthesis; L-histidine from 5-phospho-alpha-D-ribose 1-diphosphate: step 4/9. This Chloroflexus aggregans (strain MD-66 / DSM 9485) protein is 1-(5-phosphoribosyl)-5-[(5-phosphoribosylamino)methylideneamino] imidazole-4-carboxamide isomerase.